A 393-amino-acid polypeptide reads, in one-letter code: Bifunctional enzyme Fae/Hps (393 aa).

The tract at residues 1–161 (MYQIGEALVG…YEKDRGAHAV (161 aa)) is formaldehyde-activating enzyme. Histidine 17 acts as the Proton donor in catalysis. Positions 19, 48, 66, 68, and 83 each coordinate substrate. Residues 162–393 (MGFKVQRLWD…IDQFRVMTDF (232 aa)) form a 3-hexulose-6-phosphate synthase region.

The protein in the N-terminal section; belongs to the formaldehyde-activating enzyme family. In the C-terminal section; belongs to the HPS/KGPDC family. HPS subfamily.

It carries out the reaction 5,6,7,8-tetrahydromethanopterin + formaldehyde = 5,10-methylenetetrahydromethanopterin + H2O. The enzyme catalyses D-ribulose 5-phosphate + formaldehyde = D-arabino-hex-3-ulose 6-phosphate. Its pathway is carbohydrate biosynthesis; D-ribose 5-phosphate biosynthesis. In terms of biological role, catalyzes the condensation of formaldehyde with tetrahydromethanopterin (H(4)MPT) to 5,10-methylenetetrahydromethanopterin. Its function is as follows. Catalyzes the reversible formation of ribulose-5-phosphate and formaldehyde from 3-hexulose-6-phosphate. The sequence is that of Bifunctional enzyme Fae/Hps from Methanosphaerula palustris (strain ATCC BAA-1556 / DSM 19958 / E1-9c).